Consider the following 369-residue polypeptide: C-C chemokine receptor type 9 (369 aa).

Residues methionine 1–serine 48 are Extracellular-facing. Residue asparagine 32 is glycosylated (N-linked (GlcNAc...) asparagine). 2 disulfides stabilise this stretch: cysteine 38–cysteine 289 and cysteine 119–cysteine 198. A helical transmembrane segment spans residues histidine 49–tryptophan 74. The Cytoplasmic portion of the chain corresponds to tyrosine 75–methionine 85. Residues phenylalanine 86–alanine 109 traverse the membrane as a helical segment. Topologically, residues glycine 110–lysine 120 are extracellular. The helical transmembrane segment at valine 121–glutamine 150 threads the bilayer. The Cytoplasmic segment spans residues alanine 151–glutamine 159. The chain crosses the membrane as a helical span at residues lysine 160 to leucine 185. The Extracellular segment spans residues tyrosine 186–alanine 208. Residues lysine 209–glutamine 243 form a helical membrane-spanning segment. Residues alanine 244–serine 248 lie on the Cytoplasmic side of the membrane. A helical membrane pass occupies residues lysine 249–alanine 283. At methionine 284 to threonine 290 the chain is on the extracellular side. The chain crosses the membrane as a helical span at residues isoleucine 291–glycine 321. At glutamate 322–leucine 369 the chain is on the cytoplasmic side.

This sequence belongs to the G-protein coupled receptor 1 family. Highly expressed in the thymus and low in lymph nodes and spleen.

Its subcellular location is the cell membrane. Receptor for chemokine SCYA25/TECK. Subsequently transduces a signal by increasing the intracellular calcium ions level. The protein is C-C chemokine receptor type 9 (Ccr9) of Mus musculus (Mouse).